Reading from the N-terminus, the 205-residue chain is Large ribosomal subunit protein uL4 (205 aa).

The interval 43 to 96 (GKRQGTSKVKNRSAVRGGGKKPWRQKGTGRARQGSIRSPQWRGGGTVFGPTPRS) is disordered. A compositionally biased stretch (basic residues) spans 51 to 71 (VKNRSAVRGGGKKPWRQKGTG).

This sequence belongs to the universal ribosomal protein uL4 family. In terms of assembly, part of the 50S ribosomal subunit.

Its function is as follows. One of the primary rRNA binding proteins, this protein initially binds near the 5'-end of the 23S rRNA. It is important during the early stages of 50S assembly. It makes multiple contacts with different domains of the 23S rRNA in the assembled 50S subunit and ribosome. In terms of biological role, forms part of the polypeptide exit tunnel. This Lactobacillus helveticus (strain DPC 4571) protein is Large ribosomal subunit protein uL4.